The sequence spans 169 residues: Probable chemoreceptor glutamine deamidase CheD (169 aa).

Belongs to the CheD family.

The catalysed reaction is L-glutaminyl-[protein] + H2O = L-glutamyl-[protein] + NH4(+). Functionally, probably deamidates glutamine residues to glutamate on methyl-accepting chemotaxis receptors (MCPs), playing an important role in chemotaxis. This chain is Probable chemoreceptor glutamine deamidase CheD, found in Solibacter usitatus (strain Ellin6076).